Consider the following 255-residue polypeptide: 5-oxoprolinase subunit A (255 aa).

Belongs to the LamB/PxpA family. In terms of assembly, forms a complex composed of PxpA, PxpB and PxpC.

The enzyme catalyses 5-oxo-L-proline + ATP + 2 H2O = L-glutamate + ADP + phosphate + H(+). Functionally, catalyzes the cleavage of 5-oxoproline to form L-glutamate coupled to the hydrolysis of ATP to ADP and inorganic phosphate. This is 5-oxoprolinase subunit A from Rhodopseudomonas palustris (strain BisA53).